A 492-amino-acid chain; its full sequence is NADH-quinone oxidoreductase subunit N (492 aa).

The next 14 helical transmembrane spans lie at 16-36 (LLIP…VGVF), 44-64 (LYIT…FLEG), 81-101 (ISLL…LFFM), 111-131 (GAEF…MASS), 134-154 (LILI…LIAL), 168-188 (FIMG…LYAA), 210-230 (ILVF…VTLV), 244-264 (NALL…AVII), 276-296 (AFVE…PNLI), 306-326 (MLAY…LINT), 332-352 (VIFF…GILW), 382-402 (LAIL…FCVF), 423-443 (IMAI…IYIF), and 463-483 (FALS…QNLL).

Belongs to the complex I subunit 2 family. In terms of assembly, NDH-1 is composed of 14 different subunits. Subunits NuoA, H, J, K, L, M, N constitute the membrane sector of the complex.

The protein localises to the cell inner membrane. It carries out the reaction a quinone + NADH + 5 H(+)(in) = a quinol + NAD(+) + 4 H(+)(out). Functionally, NDH-1 shuttles electrons from NADH, via FMN and iron-sulfur (Fe-S) centers, to quinones in the respiratory chain. The immediate electron acceptor for the enzyme in this species is believed to be ubiquinone. Couples the redox reaction to proton translocation (for every two electrons transferred, four hydrogen ions are translocated across the cytoplasmic membrane), and thus conserves the redox energy in a proton gradient. This Helicobacter hepaticus (strain ATCC 51449 / 3B1) protein is NADH-quinone oxidoreductase subunit N.